We begin with the raw amino-acid sequence, 301 residues long: Phospholipase A1 (301 aa).

C4 and C87 are oxidised to a cystine. The Nucleophile role is filled by S137. The Charge relay system role is filled by D165. Intrachain disulfides connect C176–C181 and C219–C228. The Charge relay system role is filled by H230. Intrachain disulfides connect C245–C269, C246–C294, and C262–C267.

This sequence belongs to the AB hydrolase superfamily. Lipase family. Expressed by the venom gland.

It is found in the secreted. It carries out the reaction a 1,2-diacyl-sn-glycero-3-phosphocholine + H2O = a 2-acyl-sn-glycero-3-phosphocholine + a fatty acid + H(+). Its function is as follows. Catalyzes the hydrolysis of phosphatidylcholine with phospholipase A1 activity. May act as an allergen and induce hemolytic activity. The sequence is that of Phospholipase A1 from Vespa crabro (European hornet).